The sequence spans 266 residues: uncharacterized protein (266 aa).

An N-terminal signal peptide occupies residues 1 to 22; sequence MGYLKRLVLYIVIMVMSVFIIG. Cys-23 carries N-palmitoyl cysteine lipidation. Cys-23 is lipidated: S-diacylglycerol cysteine.

This sequence belongs to the staphylococcal tandem lipoprotein family.

The protein resides in the cell membrane. This is an uncharacterized protein from Staphylococcus aureus (strain USA300).